The chain runs to 332 residues: tRNA (cytosine(38)-C(5))-methyltransferase (332 aa).

Residues 3 to 332 (HKILELYSGI…ISELLKILFE (330 aa)) form the SAM-dependent MTase C5-type domain. S-adenosyl-L-homocysteine is bound by residues 12-14 (IGG), 33-34 (DI), 55-56 (NI), and serine 75. The active site involves cysteine 78. Residues glutamine 79, serine 97, and 316 to 317 (NS) contribute to the S-adenosyl-L-homocysteine site.

This sequence belongs to the class I-like SAM-binding methyltransferase superfamily. C5-methyltransferase family.

Its subcellular location is the cytoplasm. It localises to the nucleus. It carries out the reaction cytidine(38) in tRNA + S-adenosyl-L-methionine = 5-methylcytidine(38) in tRNA + S-adenosyl-L-homocysteine + H(+). The enzyme catalyses a 2'-deoxycytidine in DNA + S-adenosyl-L-methionine = a 5-methyl-2'-deoxycytidine in DNA + S-adenosyl-L-homocysteine + H(+). Its function is as follows. Specifically methylates cytosine 38 in the anticodon loop of tRNA(Asp). Also has DNA (cytosine-5)-methyltransferase activity. Shows affinity for both tRNA(Asp) and DNA substrates. The polypeptide is tRNA (cytosine(38)-C(5))-methyltransferase (Spodoptera frugiperda (Fall armyworm)).